Here is a 272-residue protein sequence, read N- to C-terminus: Phosphatidylglycerol--prolipoprotein diacylglyceryl transferase (272 aa).

4 helical membrane-spanning segments follow: residues 21–41 (IAVH…IFVA), 60–80 (YIWW…VLFY), 101–121 (GVYA…FIIA), and 131–151 (VSFW…YIFG). Arginine 152 serves as a coordination point for a 1,2-diacyl-sn-glycero-3-phospho-(1'-sn-glycerol). 3 helical membrane passes run 181–201 (PSQI…LAFY), 209–229 (GQLA…AEFF), and 244–264 (LTMG…FYVV).

It belongs to the Lgt family.

The protein resides in the cell inner membrane. The catalysed reaction is L-cysteinyl-[prolipoprotein] + a 1,2-diacyl-sn-glycero-3-phospho-(1'-sn-glycerol) = an S-1,2-diacyl-sn-glyceryl-L-cysteinyl-[prolipoprotein] + sn-glycerol 1-phosphate + H(+). The protein operates within protein modification; lipoprotein biosynthesis (diacylglyceryl transfer). Functionally, catalyzes the transfer of the diacylglyceryl group from phosphatidylglycerol to the sulfhydryl group of the N-terminal cysteine of a prolipoprotein, the first step in the formation of mature lipoproteins. The protein is Phosphatidylglycerol--prolipoprotein diacylglyceryl transferase of Aliarcobacter butzleri (strain RM4018) (Arcobacter butzleri).